Reading from the N-terminus, the 479-residue chain is Anaerobic nitric oxide reductase flavorubredoxin (479 aa).

The tract at residues 30-210 (LRGSSYNSYL…PFSRLVTPKI (181 aa)) is zinc metallo-hydrolase. Fe cation-binding residues include His-79, Glu-81, Asp-83, His-147, Asp-166, and His-227. Residues 254 to 393 (ITIFYDTMSN…LCRQHGRDIA (140 aa)) enclose the Flavodoxin-like domain. Residues 260 to 264 (TMSNN) and 342 to 369 (AFGS…EMSL) contribute to the FMN site. The Rubredoxin-like domain maps to 423 to 474 (GPKMQCSVCQWIYDPALGEPLQDVAPGTPWSDVPDNFLCPECSLGKDVFDVL). Cys-428, Cys-431, Cys-461, and Cys-464 together coordinate Fe cation.

This sequence in the N-terminal section; belongs to the zinc metallo-hydrolase group 3 family. In terms of assembly, homotetramer. It depends on Fe cation as a cofactor. Requires FMN as cofactor.

Its subcellular location is the cytoplasm. It participates in nitrogen metabolism; nitric oxide reduction. In terms of biological role, anaerobic nitric oxide reductase; uses NADH to detoxify nitric oxide (NO), protecting several 4Fe-4S NO-sensitive enzymes. Has at least 2 reductase partners, only one of which (NorW, flavorubredoxin reductase) has been identified. NO probably binds to the di-iron center; electrons enter from the NorW at rubredoxin and are transferred sequentially to the FMN center and the di-iron center. Also able to function as an aerobic oxygen reductase. In Salmonella typhi, this protein is Anaerobic nitric oxide reductase flavorubredoxin.